The primary structure comprises 436 residues: GTPase Der (436 aa).

2 EngA-type G domains span residues 4–167 (PIVA…GEEE) and 176–351 (IRLS…ENHK). Residues 10 to 17 (GRPNVGKS), 57 to 61 (DTGGI), 119 to 122 (NKVD), 182 to 189 (GRPNVGKS), 229 to 233 (DTAGM), and 294 to 297 (NKWD) each bind GTP. The KH-like domain maps to 352–436 (KRVQSSTLNE…PIHIIARKRN (85 aa)).

The protein belongs to the TRAFAC class TrmE-Era-EngA-EngB-Septin-like GTPase superfamily. EngA (Der) GTPase family. In terms of assembly, associates with the 50S ribosomal subunit.

In terms of biological role, GTPase that plays an essential role in the late steps of ribosome biogenesis. This Staphylococcus aureus (strain USA300) protein is GTPase Der.